Here is a 379-residue protein sequence, read N- to C-terminus: Cytochrome b (379 aa).

The next 4 helical transmembrane spans lie at 33–53 (FGSL…FLAM), 77–98 (WLIR…FIHV), 113–133 (WNIG…GYVL), and 178–198 (FFAF…VHLL). 2 residues coordinate heme b: His83 and His97. Heme b-binding residues include His182 and His196. His201 serves as a coordination point for a ubiquinone. The next 4 helical transmembrane spans lie at 226–246 (TKDL…ALFF), 288–308 (LGGV…PLLN), 320–340 (ITQV…WIGG), and 347–367 (XTMI…ILIP).

It belongs to the cytochrome b family. As to quaternary structure, the cytochrome bc1 complex contains 11 subunits: 3 respiratory subunits (MT-CYB, CYC1 and UQCRFS1), 2 core proteins (UQCRC1 and UQCRC2) and 6 low-molecular weight proteins (UQCRH/QCR6, UQCRB/QCR7, UQCRQ/QCR8, UQCR10/QCR9, UQCR11/QCR10 and a cleavage product of UQCRFS1). This cytochrome bc1 complex then forms a dimer. Heme b is required as a cofactor.

Its subcellular location is the mitochondrion inner membrane. In terms of biological role, component of the ubiquinol-cytochrome c reductase complex (complex III or cytochrome b-c1 complex) that is part of the mitochondrial respiratory chain. The b-c1 complex mediates electron transfer from ubiquinol to cytochrome c. Contributes to the generation of a proton gradient across the mitochondrial membrane that is then used for ATP synthesis. This chain is Cytochrome b (MT-CYB), found in Akodon boliviensis (Bolivian grass mouse).